The sequence spans 240 residues: Adapter protein MecA (240 aa).

This sequence belongs to the MecA family. In terms of assembly, homodimer.

In terms of biological role, enables the recognition and targeting of unfolded and aggregated proteins to the ClpC protease or to other proteins involved in proteolysis. This is Adapter protein MecA from Streptococcus mutans serotype c (strain ATCC 700610 / UA159).